The following is a 232-amino-acid chain: 2,3,4,5-tetrahydropyridine-2,6-dicarboxylate N-acetyltransferase (232 aa).

The protein belongs to the transferase hexapeptide repeat family. DapH subfamily.

The catalysed reaction is (S)-2,3,4,5-tetrahydrodipicolinate + acetyl-CoA + H2O = L-2-acetamido-6-oxoheptanedioate + CoA. It participates in amino-acid biosynthesis; L-lysine biosynthesis via DAP pathway; LL-2,6-diaminopimelate from (S)-tetrahydrodipicolinate (acetylase route): step 1/3. Its function is as follows. Catalyzes the transfer of an acetyl group from acetyl-CoA to tetrahydrodipicolinate. The polypeptide is 2,3,4,5-tetrahydropyridine-2,6-dicarboxylate N-acetyltransferase (Streptococcus sanguinis (strain SK36)).